The primary structure comprises 351 residues: Histidine protein kinase SaeS (351 aa).

2 helical membrane-spanning segments follow: residues 9–29 (IIIGVVSSILLTSTILAIAYI) and 40–60 (TLTLTTIITSCLTLLICSIFI). The HAMP domain maps to 61–114 (NPLIQKIKQFNIKTKQFANGNYASNDKTFNSPKEIYELNQSFNKMASEITQQMN). The Histidine kinase domain occupies 129–348 (NLAHDLKTPL…TMTVTLHKLD (220 aa)). His-132 bears the Phosphohistidine; by autocatalysis mark.

Autophosphorylated.

The protein localises to the cell membrane. The enzyme catalyses ATP + protein L-histidine = ADP + protein N-phospho-L-histidine.. Functionally, member of the two-component regulatory system SaeR/SaeS involved in the regulation of staphylococcal virulence factors in a strain-dependent fashion. Probably functions as a membrane-associated protein kinase that upon sensing the appropriate signal, autophosphorylates and in turn activates the cytosolic response regulator SaeR. The protein is Histidine protein kinase SaeS (saeS) of Staphylococcus aureus (strain USA300).